Reading from the N-terminus, the 910-residue chain is p53-induced death domain-containing protein 1 (910 aa).

The disordered stretch occupies residues 1–25 (MAATVEGPELEAAAAAGDASEDSDA). N-acetylalanine is present on A2. LRR repeat units follow at residues 126–147 (HLAH…VLQM), 149–171 (GLGA…GALP), 172–194 (ALTF…GALS), 195–216 (TLQR…IGGL), 218–240 (SLLE…AGLR), 241–263 (SLRL…ARLP), and 264–285 (LLTR…LLDA). A phosphoserine mark is found at S299 and S305. 2 ZU5 domains span residues 322–454 (DLDS…VSRP) and 455–596 (VSNA…WYTT). 2 peptidase S68 regions span residues 423 to 452 (DLET…LVVS) and 566 to 594 (DITA…WLWY). Catalysis depends on residues H444, S446, H586, and S588. The UPA domain stretch occupies residues 580 to 716 (ARFQVTHFSW…TTTLDREAQA (137 aa)). In terms of domain architecture, Death spans 788–873 (TQSNLLSVAG…DVAEEVRAVL (86 aa)). Residues 884–910 (IRRMGLAPKDPALPGSSAPQPPEPAQA) are disordered.

In terms of assembly, forms a complex named the PIDDosome with CASP2 and CRADD. Forms a complex with IKBKG and RIPK1. Interacts with FADD and MADD. Post-translationally, undergoes autoproteolytic processing whose extent either directs cells towards survival or apoptotic pathways. Autoproteolytically cleaved into two main fragments PIDD-N and PIDD-C. PIDD-C can be further processed into PIDD-CC, a processing which is enhanced by DNA damage. The cleavage producing PIDD-C is required for translocation of PIDD1 to the nucleus upon DNA damage and activation of NF-kappa-B. PIDD-CC mediates the interaction with CRADD and the cleavage producing PIDD-CC is required for the activation of CASP2. PIDD-N remains associated with PIDD-C and PIDD-CC after cleavage. In terms of tissue distribution, ubiquitous.

Its subcellular location is the cytoplasm. It localises to the nucleus. Component of the DNA damage/stress response pathway that functions downstream of p53/TP53 and can either promote cell survival or apoptosis. Associated with CRADD and the CASP2 caspase, it forms the PIDDosome a complex that activates CASP2 and triggers apoptosis. Associated with IKBKG and RIPK1, it enhances sumoylation and ubiquitination of IKBKG which is important for activation of the transcription factor NF-kappa-B. In Homo sapiens (Human), this protein is p53-induced death domain-containing protein 1.